Here is a 57-residue protein sequence, read N- to C-terminus: uncharacterized protein (57 aa).

This is an uncharacterized protein from Methanocaldococcus jannaschii (strain ATCC 43067 / DSM 2661 / JAL-1 / JCM 10045 / NBRC 100440) (Methanococcus jannaschii).